The following is a 291-amino-acid chain: UPF0276 protein VV1_0952 (291 aa).

Belongs to the UPF0276 family.

This chain is UPF0276 protein VV1_0952, found in Vibrio vulnificus (strain CMCP6).